Here is a 472-residue protein sequence, read N- to C-terminus: Inhibitor of Apoptosis OPG037 (472 aa).

ANK repeat units follow at residues 97-126 (DGNY…DPNA), 130-161 (HNKT…KINN), 233-263 (DGNT…DVNK), 267-297 (FGDS…VITD), 322-351 (YDST…ICED), and 353-377 (MYYA…SVDS).

It belongs to the orthopoxvirus OPG037 protein family. In terms of assembly, may interact with host caspase-9-Apaf-1 complex.

The protein localises to the host cytoplasm. Functionally, inhibits host apoptosis. Acts by associating with host apoptosome. The sequence is that of Inhibitor of Apoptosis OPG037 (OPG037) from Homo sapiens (Human).